A 316-amino-acid chain; its full sequence is dTDP-4-dehydro-6-deoxyglucose reductase (316 aa).

16 to 17 (FI) lines the NAD(+) pocket. Catalysis depends on tyrosine 151, which acts as the Proton acceptor. Lysine 155 is a binding site for NAD(+).

This sequence belongs to the NAD(P)-dependent epimerase/dehydratase family.

It catalyses the reaction dTDP-alpha-D-fucose + NAD(+) = dTDP-4-dehydro-6-deoxy-alpha-D-glucose + NADH + H(+). The enzyme catalyses dTDP-alpha-D-fucose + NADP(+) = dTDP-4-dehydro-6-deoxy-alpha-D-glucose + NADPH + H(+). It participates in bacterial outer membrane biogenesis; LPS O-antigen biosynthesis. With respect to regulation, inhibited by Cu(2+), while other divalent cations such as Ca(2+), Co(2+), Fe(2+), Mn(2+) and Mg(2+) have no obvious effects on enzyme activity. Functionally, catalyzes the stereospecific reduction of the C-4 keto group of dTDP-4-dehydro-6-deoxy-D-glucose, leading to dTDP-D-fucopyranose. This is a step in the biosynthesis of D-fucofuranose, a component of E.coli O52 O antigen. Is more efficient using NADH than NADPH as cosubstrate. The chain is dTDP-4-dehydro-6-deoxyglucose reductase (fcf1) from Escherichia coli.